Consider the following 302-residue polypeptide: Tyrosine recombinase XerC (302 aa).

One can recognise a Core-binding (CB) domain in the interval 2–89; that stretch reads QPLMEQIRAF…AIRSFYRHLL (88 aa). Residues 110–289 form the Tyr recombinase domain; the sequence is RLPFHLDIDQ…SLDRLMEVYD (180 aa). Active-site residues include arginine 150, lysine 174, histidine 241, arginine 244, and histidine 267. The active-site O-(3'-phospho-DNA)-tyrosine intermediate is tyrosine 276.

The protein belongs to the 'phage' integrase family. XerC subfamily. Forms a cyclic heterotetrameric complex composed of two molecules of XerC and two molecules of XerD.

It is found in the cytoplasm. In terms of biological role, site-specific tyrosine recombinase, which acts by catalyzing the cutting and rejoining of the recombining DNA molecules. The XerC-XerD complex is essential to convert dimers of the bacterial chromosome into monomers to permit their segregation at cell division. It also contributes to the segregational stability of plasmids. This Pelobacter propionicus (strain DSM 2379 / NBRC 103807 / OttBd1) protein is Tyrosine recombinase XerC.